Here is a 365-residue protein sequence, read N- to C-terminus: MTENITTETRPSIYGLTRDQLIEWAIENGEKKFRATQVWDWLYRKRVQSFEEMSNLSAVFIDKLNEAFILNPLEQVVVQESADGTVKYLFMLPDKVMIETVLMRQSYGLSVCVTTQVGCNMGCTFCASGILKKERDVTAGEIVSQIMLVQKYFDERGLDERVSHVVVMGIGEPFDNYEHLMNFLRVINDDNGLAIGARHITVSTCGFMPAKIKEFAHDNLQINLAISLHAPNNELRTSLMRITRNAPLEKLFEAIDYYTETTNRRVTYEYIMLSGENDSPEIAQQLADLIKSRNKLSYVNLIPYNPVAEHIKYERSTKDNTAKFYDVLKKNGINCVVRQEHGTDIDAACGQLRSKQIKKNKAKLA.

Glutamate 99 (proton acceptor) is an active-site residue. Positions glutamine 105–aspartate 344 constitute a Radical SAM core domain. Cysteine 112 and cysteine 349 are disulfide-bonded. 3 residues coordinate [4Fe-4S] cluster: cysteine 119, cysteine 123, and cysteine 126. S-adenosyl-L-methionine-binding positions include glycine 171 to glutamate 172, serine 203, serine 227 to histidine 229, and asparagine 305. Cysteine 349 serves as the catalytic S-methylcysteine intermediate.

Belongs to the radical SAM superfamily. RlmN family. Requires [4Fe-4S] cluster as cofactor.

The protein localises to the cytoplasm. It catalyses the reaction adenosine(2503) in 23S rRNA + 2 reduced [2Fe-2S]-[ferredoxin] + 2 S-adenosyl-L-methionine = 2-methyladenosine(2503) in 23S rRNA + 5'-deoxyadenosine + L-methionine + 2 oxidized [2Fe-2S]-[ferredoxin] + S-adenosyl-L-homocysteine. The enzyme catalyses adenosine(37) in tRNA + 2 reduced [2Fe-2S]-[ferredoxin] + 2 S-adenosyl-L-methionine = 2-methyladenosine(37) in tRNA + 5'-deoxyadenosine + L-methionine + 2 oxidized [2Fe-2S]-[ferredoxin] + S-adenosyl-L-homocysteine. Functionally, specifically methylates position 2 of adenine 2503 in 23S rRNA and position 2 of adenine 37 in tRNAs. The sequence is that of Probable dual-specificity RNA methyltransferase RlmN from Lactococcus lactis subsp. cremoris (strain MG1363).